A 277-amino-acid polypeptide reads, in one-letter code: MLRVRILLIYLCTFVVITSTKTIEYTACNDTIIIPCIIDNPTKYIRWKLDNHDILTYNKTSKTTILSKWHTSARLHSLSDSDVSLIMEYKDILPGTYTCGDNTGIKYTVKLIQRHTNWFNDYQTMLMFIFTGITLFLLFLEIAYTSISVVFSTNLGILQVFGCVIAMIELCGAFLFYPSMFTLRHIIGLLMMTLPSIFLIITKVFSFWLLCKLSCAVHLIIYYQLAGYILTVLGLGLSLKECVDGTLLLSGLGTIMVSEHFGLLFLVCFPSTQRDYY.

N-linked (GlcNAc...) asparagine; by host glycosylation is found at asparagine 29 and asparagine 58. The next 5 helical transmembrane spans lie at 124 to 144 (TMLMFIFTGITLFLLFLEIAY), 156 to 176 (GILQVFGCVIAMIELCGAFLF), 186 to 206 (IIGLLMMTLPSIFLIITKVFS), 219 to 239 (LIIYYQLAGYILTVLGLGLSL), and 247 to 267 (LLLSGLGTIMVSEHFGLLFLV).

It belongs to the orthopoxvirus OPG166 protein family.

The protein resides in the host membrane. Promotes, when overexpressed, the influx of extracellular Ca(2+), leading to membrane permeability and host cell necrosis. This Cynomys gunnisoni (Gunnison's prairie dog) protein is Protein OPG166 (OPG166).